An 873-amino-acid chain; its full sequence is Coatomer subunit gamma-2 (873 aa).

The span at 1–11 (MIKKFDKKDEE) shows a compositional bias: basic and acidic residues. A disordered region spans residues 1 to 21 (MIKKFDKKDEESGSGSNPFQH). HEAT repeat units follow at residues 64–101 (TEAT…ISED), 283–320 (RELA…KHPS), 321–355 (AVTA…GSES), 356–392 (SVDR…KYPR), 395–430 (SVMM…ENPE), and 467–504 (PTPS…QNDD).

This sequence belongs to the COPG family. Oligomeric complex.

It is found in the cytoplasm. The protein localises to the golgi apparatus membrane. It localises to the cytoplasmic vesicle. The protein resides in the COPI-coated vesicle membrane. Its function is as follows. The coatomer is a cytosolic protein complex that binds to dilysine motifs and reversibly associates with Golgi non-clathrin-coated vesicles, which further mediate biosynthetic protein transport from the ER, via the Golgi up to the trans Golgi network. Coatomer complex is required for budding from Golgi membranes, and is essential for the retrograde Golgi-to-ER transport of dilysine-tagged proteins. The sequence is that of Coatomer subunit gamma-2 (copg2) from Danio rerio (Zebrafish).